The following is a 465-amino-acid chain: Antithrombin-III (465 aa).

The N-terminal stretch at 1-32 is a signal peptide; that stretch reads MYSPGAGSGAAGERKLCLLSLLLIGALGCAIC. 2 disulfides stabilise this stretch: Cys-41–Cys-161 and Cys-54–Cys-128. Thr-64 carries the phosphothreonine modification. Ser-69 bears the Phosphoserine mark. Trp-82 provides a ligand contact to heparin. N-linked (GlcNAc...) asparagine glycosylation occurs at Asn-129. Residue Arg-162 coordinates heparin. A glycan (N-linked (GlcNAc...) asparagine) is linked at Asn-168. Residue Arg-178 participates in heparin binding. 2 N-linked (GlcNAc...) asparagine glycosylation sites follow: Asn-188 and Asn-225. A disulfide bridge links Cys-280 with Cys-463.

This sequence belongs to the serpin family. Forms protease inhibiting heterodimer with TMPRSS7. In terms of processing, phosphorylated by FAM20C in the extracellular medium. Plasma.

The protein localises to the secreted. It is found in the extracellular space. Functionally, most important serine protease inhibitor in plasma that regulates the blood coagulation cascade. AT-III inhibits thrombin, matriptase-3/TMPRSS7, as well as factors IXa, Xa and XIa. Its inhibitory activity is greatly enhanced in the presence of heparin. The chain is Antithrombin-III (Serpinc1) from Mus musculus (Mouse).